Here is a 407-residue protein sequence, read N- to C-terminus: Inactive non-canonical poly(A) RNA polymerase protein Trf4-2 (407 aa).

Mg(2+) is bound by residues D85 and D87. Residues 221–280 (LALLLIQFLDYYGRKFDFFKYGISVLGQGGCVEKARLRSTLGENNWQSVLCIEDPVTPTN) enclose the PAP-associated domain. Residues 354 to 390 (LVQPSPTGSTSPSASASASEDERSGGPATIGFGRCDD) form a disordered region. Positions 357-371 (PSPTGSTSPSASASA) are enriched in low complexity.

The protein belongs to the DNA polymerase type-B-like family.

This is Inactive non-canonical poly(A) RNA polymerase protein Trf4-2 from Drosophila melanogaster (Fruit fly).